A 160-amino-acid polypeptide reads, in one-letter code: MIKKKKKKSYTSVYALGQYISMSTHKARRVIDQIRGRSYEEALMILELMPYRGCYPIFKLVYSAAANASHNKGFKETNLVISKAEVNQGNTVKKLKPRARGRSYPIKRPTCHITIVLEDISFYQQYEEYLMYLKNPGCRNEKRNLPCYETYSSGGPWDKK.

This sequence belongs to the universal ribosomal protein uL22 family. As to quaternary structure, part of the 50S ribosomal subunit.

The protein resides in the plastid. Its subcellular location is the chloroplast. Its function is as follows. This protein binds specifically to 23S rRNA. The globular domain of the protein is located near the polypeptide exit tunnel on the outside of the subunit, while an extended beta-hairpin is found that lines the wall of the exit tunnel in the center of the 70S ribosome. The sequence is that of Large ribosomal subunit protein uL22c (rpl22) from Aethionema grandiflorum (Persian stone-cress).